Consider the following 93-residue polypeptide: Small ribosomal subunit protein uS17 (93 aa).

Belongs to the universal ribosomal protein uS17 family. Part of the 30S ribosomal subunit.

In terms of biological role, one of the primary rRNA binding proteins, it binds specifically to the 5'-end of 16S ribosomal RNA. The protein is Small ribosomal subunit protein uS17 of Corynebacterium kroppenstedtii (strain DSM 44385 / JCM 11950 / CIP 105744 / CCUG 35717).